The following is a 639-amino-acid chain: Extracellular metalloproteinase 9 (639 aa).

Positions 1 to 19 are cleaved as a signal peptide; sequence MHGLLLAAGLLSLPLRALG. The propeptide occupies 20 to 250; sequence HPNPNPQMHT…IHGVVDYVAD (231 aa). N-linked (GlcNAc...) asparagine glycosylation is present at Asn-278. The interval 293-312 is disordered; it reads PTTRGNNGIAQDNPSGGNQY. Position 434 (His-434) interacts with Zn(2+). Glu-435 is a catalytic residue. Zn(2+) is bound at residue His-438.

This sequence belongs to the peptidase M36 family. It depends on Zn(2+) as a cofactor.

It is found in the secreted. Functionally, secreted metalloproteinase that allows assimilation of proteinaceous substrates and probably acts as a virulence factor. In Coccidioides posadasii (strain C735) (Valley fever fungus), this protein is Extracellular metalloproteinase 9 (MEP9).